The primary structure comprises 669 residues: DNA ligase (669 aa).

NAD(+) contacts are provided by residues 34–38 (DAEYD), 83–84 (SL), and Glu114. Residue Lys116 is the N6-AMP-lysine intermediate of the active site. Residues Arg137, Glu171, Lys287, and Lys311 each contribute to the NAD(+) site. Zn(2+)-binding residues include Cys405, Cys408, Cys423, and Cys428. Residues 591–669 (NVESYFAGKT…EERFLQELNK (79 aa)) form the BRCT domain.

This sequence belongs to the NAD-dependent DNA ligase family. LigA subfamily. It depends on Mg(2+) as a cofactor. Mn(2+) serves as cofactor.

It carries out the reaction NAD(+) + (deoxyribonucleotide)n-3'-hydroxyl + 5'-phospho-(deoxyribonucleotide)m = (deoxyribonucleotide)n+m + AMP + beta-nicotinamide D-nucleotide.. Its function is as follows. DNA ligase that catalyzes the formation of phosphodiester linkages between 5'-phosphoryl and 3'-hydroxyl groups in double-stranded DNA using NAD as a coenzyme and as the energy source for the reaction. It is essential for DNA replication and repair of damaged DNA. This is DNA ligase from Bacillus cereus (strain AH820).